We begin with the raw amino-acid sequence, 904 residues long: Eukaryotic translation initiation factor 3 subunit C (904 aa).

Disordered regions lie at residues 1–38 (MSRF…EEED) and 156–290 (FRES…TSEK). A compositionally biased stretch (polar residues) spans 22-32 (IQRQTAPQFTF). Over residues 161-183 (DAADDEDEEEEKKEEEESDDEEA) the composition is skewed to acidic residues. A compositionally biased stretch (basic and acidic residues) spans 194-206 (FKKDTVEKVKVEK). The segment covering 207–232 (DDDDSDDSIDWGQDSDSDESSSEEEA) has biased composition (acidic residues). The segment covering 237 to 247 (IRERFLKRPEK) has biased composition (basic and acidic residues). Over residues 257–272 (KEKKKTKETKDSRKKK) the composition is skewed to basic residues. Residues 636 to 812 (FHMHINLELL…ETVVLHRSEP (177 aa)) form the PCI domain. A disordered region spans residues 847 to 904 (RGGNQGYNRDRQNYRNQNQNRENWNNNRRQDRGNRNRNQNRDREQREQHRVEFEEKAE). Over residues 860 to 873 (YRNQNQNRENWNNN) the composition is skewed to low complexity. A compositionally biased stretch (basic and acidic residues) spans 874 to 904 (RRQDRGNRNRNQNRDREQREQHRVEFEEKAE).

This sequence belongs to the eIF-3 subunit C family. As to quaternary structure, component of the eukaryotic translation initiation factor 3 (eIF-3) complex.

Its subcellular location is the cytoplasm. Functionally, component of the eukaryotic translation initiation factor 3 (eIF-3) complex, which is involved in protein synthesis of a specialized repertoire of mRNAs and, together with other initiation factors, stimulates binding of mRNA and methionyl-tRNAi to the 40S ribosome. The eIF-3 complex specifically targets and initiates translation of a subset of mRNAs involved in cell proliferation. The protein is Eukaryotic translation initiation factor 3 subunit C of Culex quinquefasciatus (Southern house mosquito).